Here is a 761-residue protein sequence, read N- to C-terminus: MEALEVDDISPALEVTEEFFSTLDSNLEKAVQQAEVYGIQEVPELVGHEVLSNITDNGAMRNVTSLGKGGMIWDHCKSRLLETKAQNVFPAKEQFMVQRGTTPDNLSWMEQKEASTFNFFNICQRRRDRPRSVNDLLDETSTFKPGHARSRSDITQVDWRVVLKTTPLQQQQQQQPLLQGPHVTRPSFLLPSPNKIEDAQGNTEHKQTFPNILKKGYLEIRKDHDSYWQSCYAELSPYNLYFYSLDSSGNQNLYATYQLSHFQSISVLGNLEARMVDTVLYDNTQLQLKAESPWEALDWGQKLWEVVHAAVPGYMGRQNELTISPGLGHHDDYTQNHSFQKKTSGLLPPSPVLDSSKQYQNILKSGTLYRLTVQNNWKAFTFVLSRAYLMAFQPGKLDEDPLLSYNVDVCLAVQMDNLDGCDSCFQVIFPQDVLRLRAETRQRAQEWMEALKIAANVARSSEQNLQVTLRNKPKDQMGGHELRKNKRQSVTTSFLSILTTLSLERGLTAQSFKCAGCQRSIGLSNGKAKVCNYSGWYYCSSCHVDDSFLIPARIVHNWDTSKYKVSKQAKEFLEYVYEEPLIDIQQENAMLYHHAEPLAAVLRLRQRLKSLRAYLFSCRAAVAEDLRRRIFPREYLLQQIHLYSLADLQQVIEGKLAPFLGKVIKFATSHVYSCSLCSQKGFICEICNNGEILYPFEDISTSRCESCGAVFHSECKEKSVPCPRCVRRELQKKQKSFWQRLNMDESLEEACTMFELSYQNT.

Position 132 is a phosphoserine (Ser132). PH domains follow at residues 211–308 and 361–456; these read NILK…EVVH and NILK…IAAN. The segment at 669 to 722 adopts a Phorbol-ester/DAG-type zinc-finger fold; sequence SHVYSCSLCSQKGFICEICNNGEILYPFEDISTSRCESCGAVFHSECKEKSVPC.

In terms of assembly, interacts with AKT1.

Its subcellular location is the cytoplasm. The protein resides in the golgi apparatus. It localises to the cell membrane. In terms of biological role, involved in skeletal muscle differentiation. May act as a scaffold protein for AKT1 during muscle differentiation. The sequence is that of Pleckstrin homology domain-containing family M member 3 from Homo sapiens (Human).